Here is a 447-residue protein sequence, read N- to C-terminus: Tektin-4 (447 aa).

2 coiled-coil regions span residues 69–144 (ADRD…ALDA) and 304–423 (FGRR…TNSL). A compositionally biased stretch (basic and acidic residues) spans 72–81 (DQSERQRHES). The interval 72–104 (DQSERQRHESQQLAAETEALAQRTQQDSTRKVG) is disordered. A compositionally biased stretch (low complexity) spans 82–97 (QQLAAETEALAQRTQQ).

It belongs to the tektin family. In terms of assembly, microtubule inner protein component of sperm flagellar doublet microtubules. Post-translationally, ubiquitinated, leading to its degradation. Deubiquitinated by USP16, promoting its stability. As to expression, expressed in trachea multiciliated cells.

The protein localises to the cytoplasm. It localises to the cytoskeleton. It is found in the cilium axoneme. Its subcellular location is the flagellum axoneme. Microtubule inner protein (MIP) part of the dynein-decorated doublet microtubules (DMTs) in cilia and flagellar axoneme. Forms filamentous polymers in the walls of ciliary and flagellar microtubules. Contributes to normal sperm motility. This is Tektin-4 (TEKT4) from Bos taurus (Bovine).